The chain runs to 206 residues: MELKLLNENGQEGAVVNASDVVFGRDYNEALIHQVVIAYQANARQGNRAQKDREQVKHTTKKPWRQKGTGRARAGMSSSPLWRGGGRIFPNSPEENFSHKVNKKMHRAGLCSIFSQLAREGRLSVVEDIILEAPKTKLLADKFKTMGLDSVLIITDTVDENLYLASRNLPHVAIVEPRYADPLSLIYFKKVLVTKAAVAQIEELLS.

Positions 46-78 (GNRAQKDREQVKHTTKKPWRQKGTGRARAGMSS) are disordered. A compositionally biased stretch (basic residues) spans 58–70 (HTTKKPWRQKGTG).

It belongs to the universal ribosomal protein uL4 family. In terms of assembly, part of the 50S ribosomal subunit.

In terms of biological role, one of the primary rRNA binding proteins, this protein initially binds near the 5'-end of the 23S rRNA. It is important during the early stages of 50S assembly. It makes multiple contacts with different domains of the 23S rRNA in the assembled 50S subunit and ribosome. Its function is as follows. Forms part of the polypeptide exit tunnel. The chain is Large ribosomal subunit protein uL4 from Burkholderia cenocepacia (strain ATCC BAA-245 / DSM 16553 / LMG 16656 / NCTC 13227 / J2315 / CF5610) (Burkholderia cepacia (strain J2315)).